Reading from the N-terminus, the 467-residue chain is ATP synthase subunit beta (467 aa).

156–163 (GGAGVGKT) is a binding site for ATP.

This sequence belongs to the ATPase alpha/beta chains family. F-type ATPases have 2 components, CF(1) - the catalytic core - and CF(0) - the membrane proton channel. CF(1) has five subunits: alpha(3), beta(3), gamma(1), delta(1), epsilon(1). CF(0) has three main subunits: a(1), b(2) and c(9-12). The alpha and beta chains form an alternating ring which encloses part of the gamma chain. CF(1) is attached to CF(0) by a central stalk formed by the gamma and epsilon chains, while a peripheral stalk is formed by the delta and b chains.

Its subcellular location is the cell inner membrane. It carries out the reaction ATP + H2O + 4 H(+)(in) = ADP + phosphate + 5 H(+)(out). Functionally, produces ATP from ADP in the presence of a proton gradient across the membrane. The catalytic sites are hosted primarily by the beta subunits. The polypeptide is ATP synthase subunit beta (Cupriavidus pinatubonensis (strain JMP 134 / LMG 1197) (Cupriavidus necator (strain JMP 134))).